The chain runs to 318 residues: Olfactory receptor 13C9 (318 aa).

Residues 1 to 25 (MEWENQTILVEFFLKGHSVHPRLEL) are Extracellular-facing. Asn-5 carries an N-linked (GlcNAc...) asparagine glycan. Residues 26–46 (LFFVLIFIMYVVILLGNGTLI) traverse the membrane as a helical segment. Residues 47–54 (LISILDPH) lie on the Cytoplasmic side of the membrane. The chain crosses the membrane as a helical span at residues 55 to 75 (LHTPMYFFLGNLSFLDICYTT). Residues 76 to 99 (TSIPSTLVSFLSERKTISFSGCAV) lie on the Extracellular side of the membrane. Cys-97 and Cys-189 form a disulfide bridge. The chain crosses the membrane as a helical span at residues 100 to 120 (QMFLGLAMGTTECVLLGMMAF). At 121-139 (DRYVAICNPLRYPIIMSKN) the chain is on the cytoplasmic side. The helical transmembrane segment at 140-160 (AYVPMAVGSWFAGIVNSAVQT) threads the bilayer. The Extracellular portion of the chain corresponds to 161–197 (TFVVQLPFCRKNVINHFSCEILAVMKLACADISGNEF). A helical membrane pass occupies residues 198–217 (LMLVATILFTLMPLLLIVIS). Residues 218–237 (YSLIISSILKIHSSEGRSKA) lie on the Cytoplasmic side of the membrane. Residues 238 to 258 (FSTCSAHLTVVIIFYGTILFM) traverse the membrane as a helical segment. Residues 259 to 277 (YMKPKSKETLNSDDLDATD) lie on the Extracellular side of the membrane. The helical transmembrane segment at 278 to 298 (KIISMFYGVMTPMMNPLIYSL) threads the bilayer. Topologically, residues 299-318 (RNKDVKEAVKHLPNRRFFSK) are cytoplasmic.

This sequence belongs to the G-protein coupled receptor 1 family.

The protein localises to the cell membrane. Functionally, odorant receptor. This is Olfactory receptor 13C9 (OR13C9) from Homo sapiens (Human).